We begin with the raw amino-acid sequence, 405 residues long: Scarecrow-like protein 23 (405 aa).

The tract at residues Met1–Lys20 is disordered. Positions Glu31–Lys400 constitute a GRAS domain. The tract at residues Ile38–Ser102 is leucine repeat I (LRI). A LxCxE motif motif is present at residues Leu45 to Glu49. The interval Leu121–Gly186 is VHIID. A VHIID motif is present at residues Val152–Asp156. Residues Ser196–Ser228 are leucine repeat II (LRII). Residues Val238–Asn327 are PFYRE. The SAW stretch occupies residues Ala330 to Lys400.

The protein belongs to the GRAS family. In terms of assembly, interacts with SHR. Expressed in seedlings, cotyledons, shoot apex, leaves and flowers.

It is found in the nucleus. Probable transcription factor involved in plant development. The chain is Scarecrow-like protein 23 (SCL23) from Arabidopsis thaliana (Mouse-ear cress).